We begin with the raw amino-acid sequence, 468 residues long: Shaggy-related protein kinase theta (468 aa).

Disordered stretches follow at residues 1–53 (MNVM…DQST) and 91–112 (HANR…CGTE). The 285-residue stretch at 134 to 418 (YMAQRVVGTG…ALEACAHPFF (285 aa)) folds into the Protein kinase domain. ATP contacts are provided by residues 140–148 (VGTGSFGVV) and K163. D259 acts as the Proton acceptor in catalysis. Phosphotyrosine is present on Y294.

It belongs to the protein kinase superfamily. CMGC Ser/Thr protein kinase family. GSK-3 subfamily. In terms of processing, autophosphorylated mainly on threonine and serine residues. In developing pollen.

It carries out the reaction L-seryl-[protein] + ATP = O-phospho-L-seryl-[protein] + ADP + H(+). The enzyme catalyses L-threonyl-[protein] + ATP = O-phospho-L-threonyl-[protein] + ADP + H(+). Functionally, may mediate extracellular signals to regulate transcription in differentiating cells. This chain is Shaggy-related protein kinase theta, found in Brassica napus (Rape).